The sequence spans 344 residues: Probable aldo-keto reductase 1 (344 aa).

The active-site Proton donor is Tyr63. Residue His130 participates in substrate binding. 209–219 (SPLGLGFFAAG) serves as a coordination point for NADP(+).

Belongs to the aldo/keto reductase family.

This is Probable aldo-keto reductase 1 from Arabidopsis thaliana (Mouse-ear cress).